A 245-amino-acid polypeptide reads, in one-letter code: Octanoyltransferase (245 aa).

Residues 54–242 (KTAHEQVWLL…AFEKIFGPTI (189 aa)) form the BPL/LPL catalytic domain. Substrate is bound by residues 93-100 (RGGEFTYH), 173-175 (AIG), and 186-188 (GVS). Cysteine 204 functions as the Acyl-thioester intermediate in the catalytic mechanism.

This sequence belongs to the LipB family.

It localises to the cytoplasm. The catalysed reaction is octanoyl-[ACP] + L-lysyl-[protein] = N(6)-octanoyl-L-lysyl-[protein] + holo-[ACP] + H(+). The protein operates within protein modification; protein lipoylation via endogenous pathway; protein N(6)-(lipoyl)lysine from octanoyl-[acyl-carrier-protein]: step 1/2. Functionally, catalyzes the transfer of endogenously produced octanoic acid from octanoyl-acyl-carrier-protein onto the lipoyl domains of lipoate-dependent enzymes. Lipoyl-ACP can also act as a substrate although octanoyl-ACP is likely to be the physiological substrate. This Bartonella tribocorum (strain CIP 105476 / IBS 506) protein is Octanoyltransferase.